Reading from the N-terminus, the 315-residue chain is MAWSNQSAVTEFILRGLSSSLELQIFYFLFFSIVYAATVLGNLLIVVTIASEPHLHSPMYFLLGNLSFIDMSLASFATPKMIADFLREHKAISFEGCMTQMFFLHLLGGAEIVLLISMSFDRYVAICKPLHYLTIMSRRMCVGLVILSWIVGIFHALSQLAFTVNLPFCGPNEVDSFFCDLPLVIKLACVDTYILGVFMISTSGMIALVCFILLVISYTIILVTVRQRSSGGSSKALSTCSAHFTVVTLFFGPCTFIYVWPFTNFPIDKVLSVFYTIYTPLLNPVIYTVRNKDVKYSMRKLSSHIFKSRKTDHTP.

At M1 to I25 the chain is on the extracellular side. N-linked (GlcNAc...) asparagine glycosylation occurs at N5. The chain crosses the membrane as a helical span at residues F26–I49. Over A50–S57 the chain is Cytoplasmic. A helical membrane pass occupies residues P58–P79. Topologically, residues K80 to Q100 are extracellular. C97 and C189 are disulfide-bonded. A helical membrane pass occupies residues M101–F120. The Cytoplasmic portion of the chain corresponds to D121 to R139. A helical transmembrane segment spans residues M140–S158. Residues Q159–L195 lie on the Extracellular side of the membrane. The helical transmembrane segment at G196–T219 threads the bilayer. Over I220–K235 the chain is Cytoplasmic. Residues A236 to Y258 form a helical membrane-spanning segment. Over V259 to K269 the chain is Extracellular. Residues V270–V289 form a helical membrane-spanning segment. The Cytoplasmic portion of the chain corresponds to R290–P315.

Belongs to the G-protein coupled receptor 1 family.

The protein localises to the cell membrane. Odorant receptor. In Homo sapiens (Human), this protein is Olfactory receptor 4K3 (OR4K3).